Here is a 224-residue protein sequence, read N- to C-terminus: Ribosomal RNA small subunit methyltransferase G (224 aa).

S-adenosyl-L-methionine is bound by residues G69, L74, A119 to E120, and R137.

It belongs to the methyltransferase superfamily. RNA methyltransferase RsmG family.

The protein localises to the cytoplasm. Specifically methylates the N7 position of guanine in position 518 of 16S rRNA. In Mycobacterium bovis (strain ATCC BAA-935 / AF2122/97), this protein is Ribosomal RNA small subunit methyltransferase G.